Reading from the N-terminus, the 752-residue chain is MTAEEVDKESDPAIEDVKSDYDAIELGNENENENEVVSLDSMKAVISRASSELKHENDQGEERDLGSVEKDPILERYHAACKQGDMKTLREMVESKVIDLSNDYDPKERVSGLHWACINNRLSAVKYLAGAGAEVNFKGGELDATPLHWASKSGLVYIVDELLKAGADPNITDSQGYNLLHTSVFSSNIMLVIYVLFFVVDGKEDVDQPDPHQRTALQWATYQADALTVENLLKFNADVKNADDAGFTALHWGTVKGSIPVMDLLIKHGSDFFQTTNDGKNCFTIGKELYSIGSLEASLYKNGFDKNGFPLPQYFSASTGKMLTFFLPWVLIPLVFYIFSKITFFIALLINTIVLVISGLVLSRLVVPSYLLSKRHPILNSPLLAGILSGTIAIAFFIWFTKISILTFTEKPVGNIIMLGFFIGLITLFIGLMKSDPGYIPGTVDHDKVRETIKELLSLGKFDAKHFCVHTWIRIPLRSKYDRDSACLISAFDHFCPWVYNQIGLLNHKLFYMFVVLLEISVWWFLPLMMEYFDELEDYLENRKGKHFGDCHFLGDEDLCFGLHHDTFNFLLLCWVIFQAFWVLCLIAVQTVQMLKGVTDYEFVQINKKLKSNGTTTEDIFSSTPPELMSEELIAELDAPALDPRQVPQRTCFTVCCTLLGLDKLVTMIKSVLRLKSDEPSSRSSHLSALARIPTDYGWKQNLKDFWLLPDTSSPLWRRILLPPKDSHALLNGMEVDYYTLYTLPNATEELV.

2 disordered regions span residues 1-21 (MTAE…KSDY) and 49-68 (ASSE…LGSV). Topologically, residues 1–318 (MTAEEVDKES…FPLPQYFSAS (318 aa)) are cytoplasmic. Composition is skewed to basic and acidic residues over residues 9–21 (ESDP…KSDY) and 51–68 (SELK…LGSV). ANK repeat units lie at residues 72 to 102 (PILE…DLSN), 108 to 137 (ERVS…EVNF), 142 to 171 (LDAT…DPNI), 175 to 208 (QGYN…DVDQ), 212 to 241 (HQRT…DVKN), and 245 to 274 (AGFT…DFFQ). Residues 319-339 (TGKMLTFFLPWVLIPLVFYIF) form a helical membrane-spanning segment. The Lumenal segment spans residues 340–341 (SK). The chain crosses the membrane as a helical span at residues 342-362 (ITFFIALLINTIVLVISGLVL). Residues 363–380 (SRLVVPSYLLSKRHPILN) are Cytoplasmic-facing. A helical transmembrane segment spans residues 381–401 (SPLLAGILSGTIAIAFFIWFT). Residues 402–412 (KISILTFTEKP) are Lumenal-facing. A helical membrane pass occupies residues 413 to 433 (VGNIIMLGFFIGLITLFIGLM). The Cytoplasmic segment spans residues 434-509 (KSDPGYIPGT…YNQIGLLNHK (76 aa)). One can recognise a DHHC domain in the interval 466 to 516 (HFCVHTWIRIPLRSKYDRDSACLISAFDHFCPWVYNQIGLLNHKLFYMFVV). C496 acts as the S-palmitoyl cysteine intermediate in catalysis. The helical transmembrane segment at 510–530 (LFYMFVVLLEISVWWFLPLMM) threads the bilayer. The Lumenal portion of the chain corresponds to 531 to 567 (EYFDELEDYLENRKGKHFGDCHFLGDEDLCFGLHHDT). The chain crosses the membrane as a helical span at residues 568–588 (FNFLLLCWVIFQAFWVLCLIA). Residues 589-752 (VQTVQMLKGV…TLPNATEELV (164 aa)) are Cytoplasmic-facing.

This sequence belongs to the DHHC palmitoyltransferase family. AKR/ZDHHC17 subfamily.

It localises to the early endosome membrane. The protein resides in the golgi apparatus membrane. It carries out the reaction L-cysteinyl-[protein] + hexadecanoyl-CoA = S-hexadecanoyl-L-cysteinyl-[protein] + CoA. In terms of biological role, palmitoyltransferase specific for casein kinase 1. In Kluyveromyces lactis (strain ATCC 8585 / CBS 2359 / DSM 70799 / NBRC 1267 / NRRL Y-1140 / WM37) (Yeast), this protein is Palmitoyltransferase AKR1 (AKR1).